The chain runs to 143 residues: MSGRGKTGGKARAKAKSRSSRAGLQFPVGRVHRLLRKGHYAERVGAGAPVYLAAVLEYLTAEILELAGNAARDNKKTRIIPRHLQLAIRNDEELNKLLGGVTIAQGGVLPNIQAVLLPKKSSATVGPKAPAVGKKASQASQEY.

The interval 1–22 (MSGRGKTGGKARAKAKSRSSRA) is disordered. S2 carries the N-acetylserine modification. S2 bears the Phosphoserine mark. N6-acetyllysine occurs at positions 6 and 10. Positions 7-19 (TGGKARAKAKSRS) are enriched in basic residues. K10 carries the N6-lactoyllysine; alternate modification. Residues K14 and K16 each participate in a glycyl lysine isopeptide (Lys-Gly) (interchain with G-Cter in ubiquitin) cross-link. The residue at position 37 (K37) is an N6-acetyllysine; by CREBBP and EP300. Residue K120 forms a Glycyl lysine isopeptide (Lys-Gly) (interchain with G-Cter in ubiquitin) linkage. Residues S121 and S122 each carry the phosphoserine modification. The interval 121 to 143 (SSATVGPKAPAVGKKASQASQEY) is disordered. Residues K128 and K135 each participate in a glycyl lysine isopeptide (Lys-Gly) (interchain with G-Cter in SUMO2) cross-link. The residue at position 137 (S137) is a Phosphoserine. S140 bears the Phosphoserine; by ATM, ATR and PRKDC mark. The [ST]-Q motif signature appears at 140–141 (SQ). Y143 carries the post-translational modification Phosphotyrosine; by WSTF.

The protein belongs to the histone H2A family. The nucleosome is a histone octamer containing two molecules each of H2A, H2B, H3 and H4 assembled in one H3-H4 heterotetramer and two H2A-H2B heterodimers. The octamer wraps approximately 147 bp of DNA. Interacts with numerous proteins required for DNA damage signaling and repair when phosphorylated on Ser-140. These include MDC1, BRCA1 and the MRN complex, composed of MRE11, RAD50, and NBN. Interaction with the MRN complex is mediated at least in part by NBN. Also interacts with DHX9/NDHII when phosphorylated on Ser-140 and MCPH1 when phosphorylated at Ser-140 or Tyr-143. Interacts with ARRB2; the interaction is detected in the nucleus upon OR1D2 stimulation. Interacts with WRAP53/TCAB1. Interacts with TP53BP1. Interacts with HDGFL2. In terms of processing, phosphorylated on Ser-140 (to form gamma-H2AX or H2AX139ph) in response to DNA double strand breaks (DSBs) generated by exogenous genotoxic agents, by stalled replication forks, by meiotic recombination events and during immunoglobulin class switching in lymphocytes. Phosphorylation can extend up to several thousand nucleosomes from the actual site of the DSB and may mark the surrounding chromatin for recruitment of proteins required for DNA damage signaling and repair. Widespread phosphorylation may also serve to amplify the damage signal or aid repair of persistent lesions. Phosphorylation of Ser-140 (H2AX139ph) in response to ionizing radiation is mediated by both ATM and PRKDC while defects in DNA replication induce Ser-140 phosphorylation (H2AX139ph) subsequent to activation of ATR and PRKDC. Dephosphorylation of Ser-140 by PP2A is required for DNA DSB repair. In meiosis, Ser-140 phosphorylation (H2AX139ph) first occurs at synaptonemal complexes during leptotene and is an ATM-dependent response to the formation of programmed DSBs by SPO11. Ser-140 phosphorylation (H2AX139ph) subsequently occurs at unsynapsed regions of both autosomes and the XY bivalent during zygotene and is ATR- and BRCA1-dependent. Ser-140 phosphorylation (H2AX139ph) may also be required for transcriptional repression of unsynapsed chromatin and meiotic sex chromosome inactivation (MSCI), whereby the X and Y chromosomes condense in pachytene to form the heterochromatic XY-body. During immunoglobulin class switch recombination in lymphocytes, Ser-140 phosphorylation (H2AX139ph) at sites of DNA-recombination requires the activation-induced cytidine deaminase AICDA. Phosphorylation at Tyr-143 (H2AXY142ph) by BAZ1B/WSTF determines the relative recruitment of either DNA repair or pro-apoptotic factors. Phosphorylation at Tyr-143 (H2AXY142ph) favors the recruitment of APBB1/FE65 and pro-apoptosis factors such as MAPK8/JNK1, triggering apoptosis. In contrast, dephosphorylation of Tyr-143 by EYA proteins (EYA1, EYA2, EYA3 or EYA4) favors the recruitment of MDC1-containing DNA repair complexes to the tail of phosphorylated Ser-140 (H2AX139ph). Phosphorylated by VRK1. Monoubiquitination of Lys-120 (H2AXK119ub) by RING1 and RNF2/RING2 complex gives a specific tag for epigenetic transcriptional repression. Following DNA double-strand breaks (DSBs), it is ubiquitinated through 'Lys-63' linkage of ubiquitin moieties by the E2 ligase UBE2N and the E3 ligases RNF8 and RNF168, leading to the recruitment of repair proteins to sites of DNA damage. Ubiquitination at Lys-14 and Lys-16 (H2AK13Ub and H2AK15Ub, respectively) in response to DNA damage is initiated by RNF168 that mediates monoubiquitination at these 2 sites, and 'Lys-63'-linked ubiquitin are then conjugated to monoubiquitin; RNF8 is able to extend 'Lys-63'-linked ubiquitin chains in vitro. H2AK119Ub and ionizing radiation-induced 'Lys-63'-linked ubiquitination (H2AK13Ub and H2AK15Ub) are distinct events. Post-translationally, acetylation at Lys-6 (H2AXK5ac) by KAT5 component of the NuA4 histone acetyltransferase complex promotes NBN/NBS1 assembly at the sites of DNA damage. Acetylation at Lys-37 increases in S and G2 phases. This modification has been proposed to be important for DNA double-strand break repair. In terms of tissue distribution, most abundant in testis, thymus and spleen.

It localises to the nucleus. The protein localises to the chromosome. In terms of biological role, variant histone H2A which replaces conventional H2A in a subset of nucleosomes. Nucleosomes wrap and compact DNA into chromatin, limiting DNA accessibility to the cellular machineries which require DNA as a template. Histones thereby play a central role in transcription regulation, DNA repair, DNA replication and chromosomal stability. DNA accessibility is regulated via a complex set of post-translational modifications of histones, also called histone code, and nucleosome remodeling. Required for checkpoint-mediated arrest of cell cycle progression in response to low doses of ionizing radiation and for efficient repair of DNA double strand breaks (DSBs) specifically when modified by C-terminal phosphorylation. This chain is Histone H2AX, found in Mus musculus (Mouse).